The primary structure comprises 128 residues: MTHKNSCITLISPQNNKIKNTQGIKITSSAKKQILFLTKKNKKKIKLRLKKTGCAGFKYCMEEVVDTSTNLSEIIFYANDVSIIVNTNELHMLDGVKIDFVKEGLNYSFKFSHTKIKNFCGCGNSFEF.

Belongs to the HesB/IscA family.

This is an uncharacterized protein from Buchnera aphidicola subsp. Baizongia pistaciae (strain Bp).